A 418-amino-acid chain; its full sequence is Voltage-gated ClC-type chloride channel ClcB (418 aa).

Topologically, residues 1 to 4 (MFRR) are cytoplasmic. The chain crosses the membrane as a helical span at residues 5–25 (LLIATVVGILAAFAVAGFRHA). Topologically, residues 26–53 (MLLLEWLFLNNDSGSLVNAATNLSPWRR) are periplasmic. A helical transmembrane segment spans residues 54 to 74 (LLTPALGGLAAGLLLMGWQKF). The Cytoplasmic segment spans residues 75-145 (TQQRPHAPTD…QRFTPRQEWK (71 aa)). A helical membrane pass occupies residues 146 to 166 (LWIACGAAAGMAAAYRAPLAG). The Periplasmic portion of the chain corresponds to 167–177 (SLFIAEVLFGT). The helical transmembrane segment at 178 to 200 (MMLASLGPVIISAVVALLVSNLI) threads the bilayer. Residues 201–221 (NHSDALLYSVQLSVTVQARDY) lie on the Cytoplasmic side of the membrane. Residues 222–242 (ALIISTGVLAGLCGPLLLTLM) traverse the membrane as a helical segment. Topologically, residues 243-257 (NACHRGFVSLKLAPP) are periplasmic. The chain crosses the membrane as a helical span at residues 258 to 278 (WQLALGGLIVGLLSLFTPAVW). Residues 279–290 (GNGYSTVQSFLT) lie on the Cytoplasmic side of the membrane. The helical transmembrane segment at 291–311 (APPLLMIIAGIFLCKLCAVLA) threads the bilayer. Residues 312–315 (SSGS) are Periplasmic-facing. Residues 316–336 (GAPGGVFTPTLFIGLAIGMLY) traverse the membrane as a helical segment. The Cytoplasmic segment spans residues 337-351 (GRSLGLWFPDGEEIT). Residues 352–372 (LLLGLTGMATLLAATTHAPIM) form a helical membrane-spanning segment. The Periplasmic segment spans residues 373–379 (STLMICE). Residues 380–400 (MTGEYQLLPGLLIACVIASVI) form a helical membrane-spanning segment. The Cytoplasmic segment spans residues 401-418 (SRTLHRDSIYRQHTAQHS).

The protein belongs to the chloride channel (TC 2.A.49) family. ClcB subfamily.

Its subcellular location is the cell inner membrane. In terms of biological role, probably acts as an electrical shunt for an outwardly-directed proton pump that is linked to amino acid decarboxylation, as part of the extreme acid resistance (XAR) response. This chain is Voltage-gated ClC-type chloride channel ClcB (clcB), found in Escherichia coli O157:H7.